The following is a 436-amino-acid chain: 3-ketoacyl-CoA thiolase (436 aa).

Cys99 functions as the Acyl-thioester intermediate in the catalytic mechanism. Catalysis depends on proton acceptor residues His392 and Cys422.

Belongs to the thiolase-like superfamily. Thiolase family. In terms of assembly, heterotetramer of two alpha chains (FadJ) and two beta chains (FadI).

It is found in the cytoplasm. It carries out the reaction an acyl-CoA + acetyl-CoA = a 3-oxoacyl-CoA + CoA. It participates in lipid metabolism; fatty acid beta-oxidation. Its function is as follows. Catalyzes the final step of fatty acid oxidation in which acetyl-CoA is released and the CoA ester of a fatty acid two carbons shorter is formed. In Salmonella paratyphi A (strain AKU_12601), this protein is 3-ketoacyl-CoA thiolase.